The primary structure comprises 436 residues: Protein VHS2 (436 aa).

The segment at 1 to 34 (MDTSNHNQDHDSHVAAQRENDNNYMPPSPSMSES) is disordered. The span at 7–21 (NQDHDSHVAAQREND) shows a compositional bias: basic and acidic residues. Serine 53, serine 61, serine 102, and serine 172 each carry phosphoserine. 4 disordered regions span residues 165–195 (RALG…DHGS), 211–266 (NNNN…HMNF), 282–360 (NNAN…EEDN), and 389–436 (NDNH…DTTK). A compositionally biased stretch (polar residues) spans 171–183 (RSLSSQSFDNETS). 3 stretches are compositionally biased toward low complexity: residues 211–226 (NNNN…STAN), 238–261 (SFSS…ASPP), and 282–299 (NNAN…AALS). Phosphoserine occurs at positions 299, 301, 303, and 325. The segment covering 300-312 (RSPSNQQYLLKQQ) has biased composition (polar residues). The span at 401–436 (TINNNIKNSPAFTNSNPSSKSNSNSTITSMNPDTTK) shows a compositional bias: low complexity.

It to yeast MFL3.

It localises to the cytoplasm. In terms of biological role, can suppress the synthetic lethality of the hal3 sit4 double mutation when overexpressed, suggesting that it is involved in the G1-S transition. The protein is Protein VHS2 (VHS2) of Saccharomyces cerevisiae (strain ATCC 204508 / S288c) (Baker's yeast).